Reading from the N-terminus, the 368-residue chain is UDP-N-acetylglucosamine--N-acetylmuramyl-(pentapeptide) pyrophosphoryl-undecaprenol N-acetylglucosamine transferase (368 aa).

UDP-N-acetyl-alpha-D-glucosamine is bound by residues 10 to 12, asparagine 126, serine 200, isoleucine 255, and glutamine 300; that span reads TGG.

The protein belongs to the glycosyltransferase 28 family. MurG subfamily.

It is found in the cell membrane. It carries out the reaction Mur2Ac(oyl-L-Ala-gamma-D-Glu-L-Lys-D-Ala-D-Ala)-di-trans,octa-cis-undecaprenyl diphosphate + UDP-N-acetyl-alpha-D-glucosamine = beta-D-GlcNAc-(1-&gt;4)-Mur2Ac(oyl-L-Ala-gamma-D-Glu-L-Lys-D-Ala-D-Ala)-di-trans,octa-cis-undecaprenyl diphosphate + UDP + H(+). It participates in cell wall biogenesis; peptidoglycan biosynthesis. In terms of biological role, cell wall formation. Catalyzes the transfer of a GlcNAc subunit on undecaprenyl-pyrophosphoryl-MurNAc-pentapeptide (lipid intermediate I) to form undecaprenyl-pyrophosphoryl-MurNAc-(pentapeptide)GlcNAc (lipid intermediate II). This chain is UDP-N-acetylglucosamine--N-acetylmuramyl-(pentapeptide) pyrophosphoryl-undecaprenol N-acetylglucosamine transferase, found in Lactobacillus acidophilus (strain ATCC 700396 / NCK56 / N2 / NCFM).